The sequence spans 199 residues: Acireductone dioxygenase 1 (199 aa).

Residues His99, His101, Glu105, and His144 each coordinate Fe(2+). Residues His99, His101, Glu105, and His144 each coordinate Ni(2+).

This sequence belongs to the acireductone dioxygenase (ARD) family. It depends on Fe(2+) as a cofactor. The cofactor is Ni(2+).

It localises to the cytoplasm. It is found in the nucleus. It catalyses the reaction 1,2-dihydroxy-5-(methylsulfanyl)pent-1-en-3-one + O2 = 4-methylsulfanyl-2-oxobutanoate + formate + 2 H(+). The enzyme catalyses 1,2-dihydroxy-5-(methylsulfanyl)pent-1-en-3-one + O2 = 3-(methylsulfanyl)propanoate + CO + formate + 2 H(+). It functions in the pathway amino-acid biosynthesis; L-methionine biosynthesis via salvage pathway; L-methionine from S-methyl-5-thio-alpha-D-ribose 1-phosphate: step 5/6. In terms of biological role, catalyzes 2 different reactions between oxygen and the acireductone 1,2-dihydroxy-3-keto-5-methylthiopentene (DHK-MTPene) depending upon the metal bound in the active site. Fe-containing acireductone dioxygenase (Fe-ARD) produces formate and 2-keto-4-methylthiobutyrate (KMTB), the alpha-ketoacid precursor of methionine in the methionine recycle pathway. Ni-containing acireductone dioxygenase (Ni-ARD) produces methylthiopropionate, carbon monoxide and formate, and does not lie on the methionine recycle pathway. The polypeptide is Acireductone dioxygenase 1 (ARD1) (Arabidopsis thaliana (Mouse-ear cress)).